Here is a 351-residue protein sequence, read N- to C-terminus: Photosystem II D2 protein (351 aa).

The chain crosses the membrane as a helical span at residues 39–59; the sequence is TAYLSIGGWLTGTTFVTSWYT. Position 116 (His116) interacts with chlorophyll a. The chain crosses the membrane as a helical span at residues 123-139; sequence GFMLRQFEIARLVGIRP. Pheophytin a is bound by residues Gln128 and Asn141. A helical membrane pass occupies residues 151–164; sequence VFVSVFLMYPLGQS. His196 contacts chlorophyll a. Residues 206 to 226 form a helical membrane-spanning segment; the sequence is GALLCAIHGATVENTLFEDGE. The a plastoquinone site is built by His213 and Phe260. His213 is a Fe cation binding site. His267 contributes to the Fe cation binding site. Residues 277 to 293 form a helical membrane-spanning segment; sequence GLWTSAIGIIGLALNLR.

Belongs to the reaction center PufL/M/PsbA/D family. In terms of assembly, PSII is composed of 1 copy each of membrane proteins PsbA, PsbB, PsbC, PsbD, PsbE, PsbF, PsbH, PsbI, PsbJ, PsbK, PsbL, PsbM, PsbT, PsbX, PsbY, PsbZ, Psb30/Ycf12, peripheral proteins PsbO, CyanoQ (PsbQ), PsbU, PsbV and a large number of cofactors. It forms dimeric complexes. The cofactor is The D1/D2 heterodimer binds P680, chlorophylls that are the primary electron donor of PSII, and subsequent electron acceptors. It shares a non-heme iron and each subunit binds pheophytin, quinone, additional chlorophylls, carotenoids and lipids. There is also a Cl(-1) ion associated with D1 and D2, which is required for oxygen evolution. The PSII complex binds additional chlorophylls, carotenoids and specific lipids..

The protein localises to the cellular thylakoid membrane. The catalysed reaction is 2 a plastoquinone + 4 hnu + 2 H2O = 2 a plastoquinol + O2. Its function is as follows. Photosystem II (PSII) is a light-driven water:plastoquinone oxidoreductase that uses light energy to abstract electrons from H(2)O, generating O(2) and a proton gradient subsequently used for ATP formation. It consists of a core antenna complex that captures photons, and an electron transfer chain that converts photonic excitation into a charge separation. The D1/D2 (PsbA/PsbD) reaction center heterodimer binds P680, the primary electron donor of PSII as well as several subsequent electron acceptors. D2 is needed for assembly of a stable PSII complex. This is Photosystem II D2 protein from Synechococcus sp. (strain CC9311).